Consider the following 180-residue polypeptide: ADP-ribosylation factor 4 (180 aa).

Glycine 2 is lipidated: N-myristoyl glycine. GTP contacts are provided by residues glycine 24 to threonine 31, aspartate 67 to glutamine 71, and asparagine 126 to aspartate 129. Serine 147 carries the post-translational modification Phosphoserine.

It belongs to the small GTPase superfamily. Arf family. In terms of assembly, forms a complex containing RAB11A, ASAP1, RAB3IP, RAP11FIP3 and ARF4; the complex promotes preciliary trafficking; the complex binds to RHO in photoreceptor cells and promotes RHO ciliary transport.

It is found in the golgi apparatus. It localises to the membrane. In terms of biological role, GTP-binding protein that functions as an allosteric activator of the cholera toxin catalytic subunit, an ADP-ribosyltransferase. Involved in protein trafficking; may modulate vesicle budding and uncoating within the Golgi apparatus. Part of the ciliary targeting complex containing Rab11, ASAP1, Rabin8/RAB3IP, RAB11FIP3 and ARF4, which direct preciliary vesicle trafficking to mother centriole and ciliogenesis initiation. This is ADP-ribosylation factor 4 (Arf4) from Mus musculus (Mouse).